Here is a 430-residue protein sequence, read N- to C-terminus: Adenylosuccinate synthetase (430 aa).

Residues 13–19 (GDEGKGK) and 41–43 (GHT) each bind GTP. The active-site Proton acceptor is D14. 2 residues coordinate Mg(2+): D14 and G41. IMP is bound by residues 14–17 (DEGK), 39–42 (NAGH), T130, R144, Q225, T240, and R304. Catalysis depends on H42, which acts as the Proton donor. A substrate-binding site is contributed by 300–306 (STTGRAR). GTP contacts are provided by residues R306, 332–334 (KLD), and 414–416 (STG).

It belongs to the adenylosuccinate synthetase family. Homodimer. Mg(2+) serves as cofactor.

Its subcellular location is the cytoplasm. The catalysed reaction is IMP + L-aspartate + GTP = N(6)-(1,2-dicarboxyethyl)-AMP + GDP + phosphate + 2 H(+). The protein operates within purine metabolism; AMP biosynthesis via de novo pathway; AMP from IMP: step 1/2. Plays an important role in the de novo pathway of purine nucleotide biosynthesis. Catalyzes the first committed step in the biosynthesis of AMP from IMP. In Pseudomonas putida (strain W619), this protein is Adenylosuccinate synthetase.